The primary structure comprises 181 residues: Transcription factor bHLH167 (181 aa).

The interval 1-22 (MGRAREIGEGNSSSLREQRNLR) is disordered. The bHLH domain maps to 14–63 (SLREQRNLREKDRRMRMKHLFSILSSHVSPTRKLPVPHLIDQATSYMIQL).

The protein belongs to the bHLH protein family.

Its subcellular location is the nucleus. The chain is Transcription factor bHLH167 from Arabidopsis thaliana (Mouse-ear cress).